The primary structure comprises 1143 residues: DNA polymerase II large subunit (1143 aa).

It belongs to the archaeal DNA polymerase II family. As to quaternary structure, heterodimer of a large subunit and a small subunit.

The enzyme catalyses DNA(n) + a 2'-deoxyribonucleoside 5'-triphosphate = DNA(n+1) + diphosphate. It catalyses the reaction Exonucleolytic cleavage in the 3'- to 5'-direction to yield nucleoside 5'-phosphates.. In terms of biological role, possesses two activities: a DNA synthesis (polymerase) and an exonucleolytic activity that degrades single-stranded DNA in the 3'- to 5'-direction. Has a template-primer preference which is characteristic of a replicative DNA polymerase. In Archaeoglobus fulgidus (strain ATCC 49558 / DSM 4304 / JCM 9628 / NBRC 100126 / VC-16), this protein is DNA polymerase II large subunit (polC).